A 262-amino-acid chain; its full sequence is Acyl-[acyl-carrier-protein]--UDP-N-acetylglucosamine O-acyltransferase (262 aa).

Belongs to the transferase hexapeptide repeat family. LpxA subfamily. As to quaternary structure, homotrimer.

It localises to the cytoplasm. It catalyses the reaction a (3R)-hydroxyacyl-[ACP] + UDP-N-acetyl-alpha-D-glucosamine = a UDP-3-O-[(3R)-3-hydroxyacyl]-N-acetyl-alpha-D-glucosamine + holo-[ACP]. Its pathway is glycolipid biosynthesis; lipid IV(A) biosynthesis; lipid IV(A) from (3R)-3-hydroxytetradecanoyl-[acyl-carrier-protein] and UDP-N-acetyl-alpha-D-glucosamine: step 1/6. Involved in the biosynthesis of lipid A, a phosphorylated glycolipid that anchors the lipopolysaccharide to the outer membrane of the cell. The sequence is that of Acyl-[acyl-carrier-protein]--UDP-N-acetylglucosamine O-acyltransferase from Paraburkholderia phytofirmans (strain DSM 17436 / LMG 22146 / PsJN) (Burkholderia phytofirmans).